The following is a 470-amino-acid chain: Histidine--tRNA ligase (470 aa).

Belongs to the class-II aminoacyl-tRNA synthetase family. In terms of assembly, homodimer.

It localises to the cytoplasm. The enzyme catalyses tRNA(His) + L-histidine + ATP = L-histidyl-tRNA(His) + AMP + diphosphate + H(+). The sequence is that of Histidine--tRNA ligase from Xanthomonas oryzae pv. oryzae (strain PXO99A).